A 310-amino-acid chain; its full sequence is Thioredoxin reductase (310 aa).

35–42 (ERGMPGGQ) is an FAD binding site. A disulfide bridge links Cys-134 with Cys-137. 277–286 (DVRDKGLRQI) serves as a coordination point for FAD.

It belongs to the class-II pyridine nucleotide-disulfide oxidoreductase family. In terms of assembly, homodimer. It depends on FAD as a cofactor.

Its subcellular location is the cytoplasm. It catalyses the reaction [thioredoxin]-dithiol + NADP(+) = [thioredoxin]-disulfide + NADPH + H(+). The chain is Thioredoxin reductase (trxB) from Staphylococcus epidermidis (strain ATCC 35984 / DSM 28319 / BCRC 17069 / CCUG 31568 / BM 3577 / RP62A).